Reading from the N-terminus, the 101-residue chain is MISLSHFLVLGGVLFAIAVLGIFLNRKNVIVLLMAIELMLLAVNMNFIAFSHYLGDVHGQVFVFFILTVAAAESAIGLAILVLLFRNLRTINVDDLDQLKG.

Transmembrane regions (helical) follow at residues 4-24, 30-50, and 61-81; these read LSHFLVLGGVLFAIAVLGIFL, IVLLMAIELMLLAVNMNFIAF, and VFVFFILTVAAAESAIGLAIL.

It belongs to the complex I subunit 4L family. As to quaternary structure, NDH-1 is composed of 14 different subunits. Subunits NuoA, H, J, K, L, M, N constitute the membrane sector of the complex.

The protein resides in the cell inner membrane. The catalysed reaction is a quinone + NADH + 5 H(+)(in) = a quinol + NAD(+) + 4 H(+)(out). NDH-1 shuttles electrons from NADH, via FMN and iron-sulfur (Fe-S) centers, to quinones in the respiratory chain. The immediate electron acceptor for the enzyme in this species is believed to be ubiquinone. Couples the redox reaction to proton translocation (for every two electrons transferred, four hydrogen ions are translocated across the cytoplasmic membrane), and thus conserves the redox energy in a proton gradient. This chain is NADH-quinone oxidoreductase subunit K, found in Thiobacillus denitrificans (strain ATCC 25259 / T1).